Here is a 374-residue protein sequence, read N- to C-terminus: Peptide chain release factor 2 (374 aa).

Glutamine 249 carries the N5-methylglutamine modification.

It belongs to the prokaryotic/mitochondrial release factor family. Post-translationally, methylated by PrmC. Methylation increases the termination efficiency of RF2.

The protein resides in the cytoplasm. Peptide chain release factor 2 directs the termination of translation in response to the peptide chain termination codons UGA and UAA. This Ruegeria sp. (strain TM1040) (Silicibacter sp.) protein is Peptide chain release factor 2.